Reading from the N-terminus, the 182-residue chain is Adenine phosphoribosyltransferase (182 aa).

This sequence belongs to the purine/pyrimidine phosphoribosyltransferase family. As to quaternary structure, homodimer.

Its subcellular location is the cytoplasm. The enzyme catalyses AMP + diphosphate = 5-phospho-alpha-D-ribose 1-diphosphate + adenine. Its pathway is purine metabolism; AMP biosynthesis via salvage pathway; AMP from adenine: step 1/1. Its function is as follows. Catalyzes a salvage reaction resulting in the formation of AMP, that is energically less costly than de novo synthesis. This Pseudomonas fluorescens (strain Pf0-1) protein is Adenine phosphoribosyltransferase.